The primary structure comprises 360 residues: Phospho-N-acetylmuramoyl-pentapeptide-transferase (360 aa).

10 helical membrane-spanning segments follow: residues 26-46, 73-93, 98-118, 132-152, 168-188, 199-219, 236-256, 263-283, 288-308, and 338-358; these read SIMA…KVIN, TMGG…WADL, VWFT…DDYW, WKYF…YAMG, VMPQ…VGTS, GLAI…AWAT, SGEL…FLWY, VFMG…IAVL, LLLL…ILQV, and VIVR…VTLK.

The protein belongs to the glycosyltransferase 4 family. MraY subfamily. Mg(2+) serves as cofactor.

The protein localises to the cell inner membrane. It carries out the reaction UDP-N-acetyl-alpha-D-muramoyl-L-alanyl-gamma-D-glutamyl-meso-2,6-diaminopimeloyl-D-alanyl-D-alanine + di-trans,octa-cis-undecaprenyl phosphate = di-trans,octa-cis-undecaprenyl diphospho-N-acetyl-alpha-D-muramoyl-L-alanyl-D-glutamyl-meso-2,6-diaminopimeloyl-D-alanyl-D-alanine + UMP. Its pathway is cell wall biogenesis; peptidoglycan biosynthesis. In terms of biological role, catalyzes the initial step of the lipid cycle reactions in the biosynthesis of the cell wall peptidoglycan: transfers peptidoglycan precursor phospho-MurNAc-pentapeptide from UDP-MurNAc-pentapeptide onto the lipid carrier undecaprenyl phosphate, yielding undecaprenyl-pyrophosphoryl-MurNAc-pentapeptide, known as lipid I. The sequence is that of Phospho-N-acetylmuramoyl-pentapeptide-transferase from Haemophilus ducreyi (strain 35000HP / ATCC 700724).